The following is a 337-amino-acid chain: Ral GTPase-activating protein subunit alpha-1 (337 aa).

As to quaternary structure, component of the heterodimeric RalGAP1 complex with RALGAPB. Heterodimerization is required for activity. Interacts with the HLH region of TCF3/isoform E12.

It localises to the cytoplasm. Its subcellular location is the nucleus. In terms of biological role, catalytic subunit of the heterodimeric RalGAP1 complex which acts as a GTPase activator for the Ras-like small GTPases RALA and RALB. The protein is Ral GTPase-activating protein subunit alpha-1 of Sus scrofa (Pig).